The sequence spans 228 residues: Octanoyltransferase (228 aa).

The BPL/LPL catalytic domain occupies 30–214; sequence KKIGDTLLLL…YFGKVFGKSL (185 aa). Substrate is bound by residues 75 to 82, 144 to 146, and 157 to 159; these read RGGDVTYH, AIG, and GFA. The active-site Acyl-thioester intermediate is the Cys175.

This sequence belongs to the LipB family.

The protein localises to the cytoplasm. The enzyme catalyses octanoyl-[ACP] + L-lysyl-[protein] = N(6)-octanoyl-L-lysyl-[protein] + holo-[ACP] + H(+). It participates in protein modification; protein lipoylation via endogenous pathway; protein N(6)-(lipoyl)lysine from octanoyl-[acyl-carrier-protein]: step 1/2. Catalyzes the transfer of endogenously produced octanoic acid from octanoyl-acyl-carrier-protein onto the lipoyl domains of lipoate-dependent enzymes. Lipoyl-ACP can also act as a substrate although octanoyl-ACP is likely to be the physiological substrate. In Caldicellulosiruptor bescii (strain ATCC BAA-1888 / DSM 6725 / KCTC 15123 / Z-1320) (Anaerocellum thermophilum), this protein is Octanoyltransferase.